The primary structure comprises 159 residues: Small ribosomal subunit protein uS9 (159 aa).

The protein belongs to the universal ribosomal protein uS9 family.

This chain is Small ribosomal subunit protein uS9, found in Beijerinckia indica subsp. indica (strain ATCC 9039 / DSM 1715 / NCIMB 8712).